A 380-amino-acid chain; its full sequence is MYG1 exonuclease (380 aa).

Residues 1 to 46 (MGRRFLRGILTLPLRSVLQAQHRMLGSEQDPPAKRPRNNLMAPPRI) constitute a mitochondrion transit peptide. Residues lysine 266 and lysine 272 each carry the N6-acetyllysine modification.

This sequence belongs to the MYG1 family. Ubiquitously expressed, with highest levels in testis.

It is found in the nucleus. The protein localises to the nucleoplasm. The protein resides in the mitochondrion matrix. It localises to the nucleolus. Functionally, 3'-5' RNA exonuclease which cleaves in situ on specific transcripts in both nucleus and mitochondrion. Involved in regulating spatially segregated organellar RNA processing, acts as a coordinator of nucleo-mitochondrial crosstalk. In nucleolus, processes pre-ribosomal RNA involved in ribosome assembly and alters cytoplasmic translation. In mitochondrial matrix, processes 3'-termini of the mito-ribosomal and messenger RNAs and controls translation of mitochondrial proteins. This chain is MYG1 exonuclease, found in Mus musculus (Mouse).